A 222-amino-acid chain; its full sequence is Prolactin-3B1 (222 aa).

The first 31 residues, 1–31 (MKLSLSQPCSFSGALLLLAVSNLLVWEKVTS), serve as a signal peptide directing secretion. Cystine bridges form between Cys-82/Cys-197 and Cys-214/Cys-222.

It belongs to the somatotropin/prolactin family.

It localises to the secreted. This is Prolactin-3B1 (Prl3b1) from Mus musculus (Mouse).